The sequence spans 538 residues: MGLLLLVLILTPSLAAYRHPDFPLLEKAQQLLQSTGSPYSTNCWLCTSSSTETPGTAYPASPREWTSIEAELHISYRWDPNLKGLMRPANSLLSTVKQDFPDIRQKPPIFGPIFTNINLMGIAPICVTAKRKNGTNVGTLPSTVCNVTFTVDSNQQTYQTYTHNQFRHQPRFPKPPNITFPQGTLLDKSSRFCQGRPSSCSTRNFWFRPADYNQCLQISNLSSTAEWVLLDQTRNSLFWENKTKGANQSQTPCVQVLAGMTIATSYLGISAVSEFFGTSLTPLFHFHISTCLKTQGAFYICGQLIHQCLPSNWTGTCTIGYVTPDIFIAPGNLSLPIPIYGNSQLPRVRRAIHFIPLLAGLGILAGTGTGIAGITKASLTYSQLSKEIANNIDTMAKALTTMQEQIDSLAAVVLQNRRGLDMLTAAQGGICLALDEKCCFWVNQSGKVQDNIRQLLNQASSLRERATQGWLNWEGTWKWFSWVLPLTGPLVSLLLLLLFGPCLLNLITQFVSSRLQAIKLQTNLSAGRRPRNIQESPF.

Residues 1–15 (MGLLLLVLILTPSLA) form the signal peptide. The Extracellular segment spans residues 16-478 (AYRHPDFPLL…GWLNWEGTWK (463 aa)). Residues 43–46 (CWLC) carry the CXXC motif. 3 disulfide bridges follow: cysteine 43–cysteine 46, cysteine 43–cysteine 439, and cysteine 431–cysteine 438. 8 N-linked (GlcNAc...) asparagine glycosylation sites follow: asparagine 133, asparagine 146, asparagine 177, asparagine 220, asparagine 241, asparagine 247, asparagine 312, and asparagine 332. The segment at 354-374 (FIPLLAGLGILAGTGTGIAGI) is fusion peptide. A CKS-17 motif is present at residues 414-430 (LQNRRGLDMLTAAQGGI). A CX6CC motif is present at residues 431-439 (CLALDEKCC). Asparagine 443 is a glycosylation site (N-linked (GlcNAc...) asparagine). The chain crosses the membrane as a helical span at residues 479–499 (WFSWVLPLTGPLVSLLLLLLF). Residues 500–538 (GPCLLNLITQFVSSRLQAIKLQTNLSAGRRPRNIQESPF) are Cytoplasmic-facing.

Belongs to the gamma type-C retroviral envelope protein family. HERV class-I FRD env subfamily. The surface and transmembrane proteins form a heterodimer. They are attached by non-covalent interactions or by a labile interchain disulfide bond. Post-translationally, specific enzymatic cleavages in vivo yield the mature SU and TM proteins. The CXXC motif is highly conserved across a broad range of retroviral envelope proteins. It is thought to participate in the formation of a labile disulfide bond possibly with the CX6CC motif present in the transmembrane protein.

Its subcellular location is the virion. The protein localises to the cell membrane. Functionally, this endogenous retroviral envelope protein has retained its original fusogenic properties and participates in trophoblast fusion and the formation of a syncytium during placenta morphogenesis. The interaction with MFSD2A is apparently important for this process. Endogenous envelope proteins may have kept, lost or modified their original function during evolution but this one can still make pseudotypes with MLV, HIV-1 or SIV-1 virions and confer infectivity. Retroviral envelope proteins mediate receptor recognition and membrane fusion during early infection. The surface protein mediates receptor recognition, while the transmembrane protein anchors the envelope heterodimer to the viral membrane through one transmembrane domain. The other hydrophobic domain, called fusion peptide, mediates fusion of the viral membrane with the target cell membrane. This Gorilla gorilla gorilla (Western lowland gorilla) protein is Syncytin-2 (ERVFRD-1).